The chain runs to 126 residues: Penton protein P31 (126 aa).

The protein resides in the virion. In association with P2 and trimeric P5, forms the spike complexes located at the 5-fold vertices of the capsid. Essential for viral infectivity. The polypeptide is Penton protein P31 (XXXI) (Acinetobacter calcoaceticus (Arthrobacter siderocapsulatus)).